A 340-amino-acid chain; its full sequence is Ribosomal RNA large subunit methyltransferase F (340 aa).

Residues 1-36 (MNAPRTPKPARKKPDSATPAKPVEPRKEASLHPRNR) form a disordered region.

Belongs to the methyltransferase superfamily. METTL16/RlmF family.

It localises to the cytoplasm. The enzyme catalyses adenosine(1618) in 23S rRNA + S-adenosyl-L-methionine = N(6)-methyladenosine(1618) in 23S rRNA + S-adenosyl-L-homocysteine + H(+). Functionally, specifically methylates the adenine in position 1618 of 23S rRNA. This is Ribosomal RNA large subunit methyltransferase F from Pseudomonas fluorescens (strain Pf0-1).